The sequence spans 201 residues: Small ribosomal subunit protein uS4 (201 aa).

An S4 RNA-binding domain is found at 93-156; sequence RRLDNMVYRL…KNLDIIKNAV (64 aa).

The protein belongs to the universal ribosomal protein uS4 family. In terms of assembly, part of the 30S ribosomal subunit. Contacts protein S5. The interaction surface between S4 and S5 is involved in control of translational fidelity.

One of the primary rRNA binding proteins, it binds directly to 16S rRNA where it nucleates assembly of the body of the 30S subunit. In terms of biological role, with S5 and S12 plays an important role in translational accuracy. This chain is Small ribosomal subunit protein uS4, found in Limosilactobacillus reuteri subsp. reuteri (strain JCM 1112) (Lactobacillus reuteri).